The sequence spans 402 residues: MSNEELTERWQGTLMNNYGTPRLPLVRGEGARLWDADGKEYLDFVGGIAVNALGHAHPAVVDAVSRQIASLGHVSNLFIAEPPVALAERLLQHFGRDGKVYFCNSGAEANEGAFKIGRLTGRPHMVATRGGFHGRTMGALALTGQPGKQEPFLPLPGDVTHVPYGDPQALAAAVTEETALVIIEPIQGENGVVVPPPGYLKAARAITAATGALLVLDEVQTGVGRTGHWFEYQAHEGVLPDVVTLAKGLGGGLPLGATVAFGRAADLLQPGHHGTTFGGNPVACAAGLAVLDTIADEGLLDNVKRQSETLRGGVEALGHPLVAHVRGAGLLLGIVLTEPLAAQVQQAAQDAGILVNAPAPDVVRLMPALNLGDDVVEAFLGALPGILDQAAETAHGDGRSGE.

Pyridoxal 5'-phosphate contacts are provided by residues 106 to 107 (GA) and F132. Residue R135 participates in N(2)-acetyl-L-ornithine binding. 217 to 220 (DEVQ) is a binding site for pyridoxal 5'-phosphate. K247 is modified (N6-(pyridoxal phosphate)lysine). T275 serves as a coordination point for N(2)-acetyl-L-ornithine. T276 serves as a coordination point for pyridoxal 5'-phosphate.

Belongs to the class-III pyridoxal-phosphate-dependent aminotransferase family. ArgD subfamily. As to quaternary structure, homodimer. Requires pyridoxal 5'-phosphate as cofactor.

It localises to the cytoplasm. It catalyses the reaction N(2)-acetyl-L-ornithine + 2-oxoglutarate = N-acetyl-L-glutamate 5-semialdehyde + L-glutamate. The protein operates within amino-acid biosynthesis; L-arginine biosynthesis; N(2)-acetyl-L-ornithine from L-glutamate: step 4/4. In Streptomyces coelicolor (strain ATCC BAA-471 / A3(2) / M145), this protein is Acetylornithine aminotransferase.